Here is a 300-residue protein sequence, read N- to C-terminus: 4-hydroxy-tetrahydrodipicolinate synthase (300 aa).

Residue Thr46 participates in pyruvate binding. Tyr135 serves as the catalytic Proton donor/acceptor. Lys163 (schiff-base intermediate with substrate) is an active-site residue. Val205 contributes to the pyruvate binding site.

The protein belongs to the DapA family. Homotetramer; dimer of dimers.

The protein localises to the cytoplasm. It carries out the reaction L-aspartate 4-semialdehyde + pyruvate = (2S,4S)-4-hydroxy-2,3,4,5-tetrahydrodipicolinate + H2O + H(+). It participates in amino-acid biosynthesis; L-lysine biosynthesis via DAP pathway; (S)-tetrahydrodipicolinate from L-aspartate: step 3/4. Catalyzes the condensation of (S)-aspartate-beta-semialdehyde [(S)-ASA] and pyruvate to 4-hydroxy-tetrahydrodipicolinate (HTPA). This chain is 4-hydroxy-tetrahydrodipicolinate synthase, found in Koribacter versatilis (strain Ellin345).